The sequence spans 159 residues: Heavy metal-associated isoprenylated plant protein 28 (159 aa).

The 64-residue stretch at 10 to 73 (LQTIEMRVHM…KVRKTGRRAE (64 aa)) folds into the HMA domain. A metal cation-binding residues include Cys-21 and Cys-24. Cysteine methyl ester is present on Cys-156. Residue Cys-156 is the site of S-farnesyl cysteine attachment. A propeptide spans 157-159 (SIM) (removed in mature form).

It belongs to the HIPP family.

Heavy-metal-binding protein. This Arabidopsis thaliana (Mouse-ear cress) protein is Heavy metal-associated isoprenylated plant protein 28.